Here is a 224-residue protein sequence, read N- to C-terminus: Large ribosomal subunit protein uL11c (224 aa).

A chloroplast-targeting transit peptide spans 1 to 66; the sequence is MAQPLVAAPS…SHRRLSIVAM (66 aa). N6,N6,N6-trimethyllysine occurs at positions 75 and 111.

As to quaternary structure, component of the chloroplast large ribosomal subunit (LSU). Mature 70S chloroplast ribosomes of higher plants consist of a small (30S) and a large (50S) subunit. The 30S small subunit contains 1 molecule of ribosomal RNA (16S rRNA) and 24 different proteins. The 50S large subunit contains 3 rRNA molecules (23S, 5S and 4.5S rRNA) and 33 different proteins.

The protein resides in the plastid. It is found in the chloroplast. In terms of biological role, component of the chloroplast ribosome (chloro-ribosome), a dedicated translation machinery responsible for the synthesis of chloroplast genome-encoded proteins, including proteins of the transcription and translation machinery and components of the photosynthetic apparatus. This is Large ribosomal subunit protein uL11c (rpl11) from Spinacia oleracea (Spinach).